Reading from the N-terminus, the 451-residue chain is BSD domain-containing protein 1 (451 aa).

In terms of domain architecture, BSD spans 146-198 (WLSRFSLEEKKGEIAELLATSPSIRALYTKMVPAAVSHSEFWQRYFYKVHRLE). 2 disordered regions span residues 252–296 (SAAL…SLVT) and 309–424 (LQTG…DLDM). The span at 275–295 (PPELAPAEGSPSESSESVSLV) shows a compositional bias: low complexity. A compositionally biased stretch (polar residues) spans 309 to 320 (LQTGVQPSGNRD). A compositionally biased stretch (basic and acidic residues) spans 365–388 (KEVESKAQGRTETLKEEGPTDLRV). Residues 392 to 411 (NSDSGKSTPSNNGKKGSSTD) are compositionally biased toward polar residues. Over residues 412–424 (ISEDWEKDFDLDM) the composition is skewed to acidic residues.

This Gallus gallus (Chicken) protein is BSD domain-containing protein 1 (BSDC1).